The primary structure comprises 559 residues: Vacuolar protein 8 (559 aa).

A lipid anchor (N-myristoyl glycine) is attached at Gly-2. Residue Cys-4 is the site of S-palmitoyl cysteine attachment. ARM repeat units follow at residues 77–116 (TERD…NLAV), 118–157 (TENK…NLAT), 159–198 (EENK…NMTH), 200–239 (DENR…NIAV), 243–282 (NRRK…NLAS), 284–323 (EKYQ…NISI), 325–365 (PMNE…NLAA), and 409–448 (DDLK…NLSS).

Belongs to the beta-catenin family.

Its subcellular location is the vacuole membrane. Its function is as follows. Functions in both vacuole inheritance and protein targeting from the cytoplasm to vacuole. The chain is Vacuolar protein 8 (VAC8) from Gibberella zeae (strain ATCC MYA-4620 / CBS 123657 / FGSC 9075 / NRRL 31084 / PH-1) (Wheat head blight fungus).